Reading from the N-terminus, the 148-residue chain is Ubiquitin-conjugating enzyme E2 28 (148 aa).

A UBC core domain is found at 1–147 (MASKRILKEL…ARSWTQKYAM (147 aa)). C85 serves as the catalytic Glycyl thioester intermediate.

It belongs to the ubiquitin-conjugating enzyme family. As to quaternary structure, interacts with SINAT5. In terms of tissue distribution, expressed in seeds, pistils, siliques, hypocotyls and leaves.

The enzyme catalyses S-ubiquitinyl-[E1 ubiquitin-activating enzyme]-L-cysteine + [E2 ubiquitin-conjugating enzyme]-L-cysteine = [E1 ubiquitin-activating enzyme]-L-cysteine + S-ubiquitinyl-[E2 ubiquitin-conjugating enzyme]-L-cysteine.. The protein operates within protein modification; protein ubiquitination. Accepts the ubiquitin from the E1 complex and catalyzes its covalent attachment to other proteins. This is Ubiquitin-conjugating enzyme E2 28 from Arabidopsis thaliana (Mouse-ear cress).